Consider the following 600-residue polypeptide: Aspartate--tRNA(Asp/Asn) ligase (600 aa).

Glutamate 187 lines the L-aspartate pocket. Residues 211 to 214 (QIFK) form an aspartate region. L-aspartate-binding residues include arginine 233 and histidine 463. Position 233 to 235 (233 to 235 (RDE)) interacts with ATP. ATP is bound at residue glutamate 497. Arginine 504 is an L-aspartate binding site. 549-552 (GVDR) is an ATP binding site.

Belongs to the class-II aminoacyl-tRNA synthetase family. Type 1 subfamily. Homodimer.

It localises to the cytoplasm. It catalyses the reaction tRNA(Asx) + L-aspartate + ATP = L-aspartyl-tRNA(Asx) + AMP + diphosphate. Its function is as follows. Aspartyl-tRNA synthetase with relaxed tRNA specificity since it is able to aspartylate not only its cognate tRNA(Asp) but also tRNA(Asn). Reaction proceeds in two steps: L-aspartate is first activated by ATP to form Asp-AMP and then transferred to the acceptor end of tRNA(Asp/Asn). The sequence is that of Aspartate--tRNA(Asp/Asn) ligase from Wolbachia sp. subsp. Drosophila simulans (strain wRi).